A 373-amino-acid polypeptide reads, in one-letter code: Opsin Rh1 (373 aa).

Topologically, residues Met1 to Thr54 are extracellular. A glycan (N-linked (GlcNAc...) asparagine) is linked at Asn20. A helical membrane pass occupies residues Ala55–Phe75. The Cytoplasmic segment spans residues Ala76–Asn86. A helical transmembrane segment spans residues Leu87 to Met107. Topologically, residues Gly108 to Asp124 are extracellular. A disulfide bridge links Cys123 with Cys200. A helical transmembrane segment spans residues Ile125 to Ser145. The Cytoplasmic portion of the chain corresponds to Leu146–Thr162. Residues Ile163–Ala183 traverse the membrane as a helical segment. At Pro184–Ser219 the chain is on the extracellular side. N-linked (GlcNAc...) asparagine glycosylation is present at Asn196. Residues Ile220 to Ala240 form a helical membrane-spanning segment. Over Val241 to Lys276 the chain is Cytoplasmic. A helical membrane pass occupies residues Val277 to Cys297. Topologically, residues Met298 to Pro308 are extracellular. Residues Leu309 to Ile331 traverse the membrane as a helical segment. The residue at position 319 (Lys319) is an N6-(retinylidene)lysine. Topologically, residues Ser332–Ala373 are cytoplasmic. The interval Asp354–Ala373 is disordered. Over residues Ser358–Ala373 the composition is skewed to polar residues.

This sequence belongs to the G-protein coupled receptor 1 family. Opsin subfamily. Phosphorylated on some or all of the serine and threonine residues present in the C-terminal region.

The protein resides in the cell projection. It localises to the rhabdomere membrane. In terms of biological role, visual pigments are the light-absorbing molecules that mediate vision. They consist of an apoprotein, opsin, covalently linked to cis-retinal. The chain is Opsin Rh1 (ninaE) from Drosophila pseudoobscura pseudoobscura (Fruit fly).